A 106-amino-acid chain; its full sequence is uncharacterized protein (106 aa).

The next 2 membrane-spanning stretches (helical) occupy residues 46-68 and 73-92; these read LLQEIILFVFCALMVVSAAILAF and AVFIVLQVCVLAVLPILIAA.

It localises to the cell membrane. This is an uncharacterized protein from Bacillus subtilis (strain 168).